Reading from the N-terminus, the 464-residue chain is Flavin-containing monooxygenase FMO GS-OX-like 7 (464 aa).

Residue 18–23 (GAGAAG) participates in FAD binding. Residue 214-219 (GSSVSG) coordinates NADP(+).

Belongs to the FMO family. Requires FAD as cofactor.

In terms of biological role, catalyzes the conversion of methylthioalkyl glucosinolates of any chain length into methylsulfinylalkyl glucosinolates. The protein is Flavin-containing monooxygenase FMO GS-OX-like 7 of Arabidopsis thaliana (Mouse-ear cress).